The sequence spans 246 residues: Receptor-transporting protein 4 (246 aa).

Residues 1–224 (MVVDFWTWEQ…EKLGPSRDPD (224 aa)) lie on the Cytoplasmic side of the membrane. The segment at 48–159 (RAFGWFRCSS…DTANCEACTL (112 aa)) adopts a 3CxxC-type zinc-finger fold. Residues 225-245 (PLNICVFILLLVFIVVKCFTS) traverse the membrane as a helical segment.

This sequence belongs to the TMEM7 family. As to quaternary structure, interacts with TASR16. Interacts with OPRD1 and OPRM1; the interaction promotes cell surface localization of the OPDR1-OPRM1 heterodimer. In terms of assembly, (Microbial infection) Interacts with influenza A virus protein NS1; this interaction sequesters NS1 from interacting with RIG-I/DDX58 to restore antiviral signaling. In terms of tissue distribution, expressed in circumvallate papillae and testis.

Its subcellular location is the membrane. The protein localises to the cytoplasm. Its function is as follows. Chaperone protein that facilitates the trafficking and functional cell surface expression of some G-protein coupled receptors (GPCRs). Promotes functional expression of the bitter taste receptor TAS2R16. Also promotes functional expression of the opioid receptor heterodimer OPRD1-OPRM1. In addition, acts as a potent IFN-inducible suppressor of pathogens including lyssavirus rabies, influenza A or yellow fever virus. Mechanistically, associates with the viral replicase, binds viral RNA, and thereby suppresses viral genome amplification that replicates at the endoplasmic reticulum. In addition, restores antiviral signaling by interacting with and sequestering influenza A virus protein NS1. The sequence is that of Receptor-transporting protein 4 (RTP4) from Homo sapiens (Human).